A 682-amino-acid chain; its full sequence is Transcription factor 12 (682 aa).

The 9aaTAD signature appears at 19–27; the sequence is DLLDFSAMF. Disordered stretches follow at residues 25 to 122, 140 to 219, and 281 to 313; these read AMFS…LYSR, LGSP…PPTS, and SVSP…ASHT. Polar residues-rich tracts occupy residues 30–48 and 56–76; these read PVNS…QFSG and GTTS…SRGF. Phosphoserine occurs at positions 47, 67, and 79. Positions 81-93 are enriched in basic and acidic residues; it reads HYSDHLNDSRLGA. Position 98 is a phosphoserine (Ser98). 2 stretches are compositionally biased toward polar residues: residues 101–121 and 144–163; these read PFMN…SLYS and AQLS…SATS. Lys110 is covalently cross-linked (Glycyl lysine isopeptide (Lys-Gly) (interchain with G-Cter in SUMO2)). A Phosphoserine modification is found at Ser116. A leucine-zipper region spans residues 119–140; the sequence is LYSRDTGLPGCQSSLLRQDLGL. A Glycyl lysine isopeptide (Lys-Gly) (interchain with G-Cter in SUMO2) cross-link involves residue Lys181. The interval 182–196 is interaction with RUNX1T1; that stretch reads KVRKVPPGLPSSVYA. The span at 282–306 shows a compositional bias: polar residues; the sequence is VSPTDINTSLPPMSSFHRGSTSSSP. Residue Thr313 is modified to Phosphothreonine. Residue Ser333 is modified to Phosphoserine. 2 disordered regions span residues 349–395 and 462–580; these read PDHT…SLHS and SASM…ERRM. The span at 352–363 shows a compositional bias: low complexity; that stretch reads TSSSFPSNPSTP. 2 stretches are compositionally biased toward polar residues: residues 364-376 and 383-395; these read VGSP…TSQW and APSS…SLHS. Low complexity predominate over residues 481–492; that stretch reads SVLSSTVTTSST. The segment covering 506-517 has biased composition (polar residues); it reads LQSQSGTVVTTE. Basic and acidic residues-rich tracts occupy residues 518-530 and 536-551; these read IKTE…ENLH and DDMK…DIKV. A Glycyl lysine isopeptide (Lys-Gly) (interchain with G-Cter in SUMO2) cross-link involves residue Lys519. Position 540 is a phosphoserine (Ser540). Lys550 is covalently cross-linked (Glycyl lysine isopeptide (Lys-Gly) (interchain with G-Cter in SUMO2)). Phosphothreonine is present on Thr557. A phosphoserine mark is found at Ser558 and Ser559. The span at 568 to 580 shows a compositional bias: basic and acidic residues; it reads PEQKIEREKERRM. The bHLH domain maps to 577 to 630; the sequence is ERRMANNARERLRVRDINEAFKELGRMCQLHLKSEKPQTKLLILHQAVAVILSL. Glycyl lysine isopeptide (Lys-Gly) (interchain with G-Cter in SUMO2) cross-links involve residues Lys609 and Lys653. Residues 632–655 are class A specific domain; that stretch reads QQVRERNLNPKAACLKRREEEKVS. The disordered stretch occupies residues 651 to 682; it reads EEKVSAVSAEPPTTLPGTHPGLSETTNPMGHM. Low complexity predominate over residues 661–672; sequence PPTTLPGTHPGL. The segment covering 673 to 682 has biased composition (polar residues); it reads SETTNPMGHM.

As to quaternary structure, efficient DNA binding requires dimerization with another bHLH protein. Forms homo- or heterooligomers with myogenin, E12 and ITF2 proteins. Interacts with PTF1A. Interacts with NEUROD2. Interacts with RUNX1T1. Interacts with AML1-MTG8/ETO (via nervy homology region 2 in oligomerized form). Interacts with BHLHA9. Expressed in several tissues and cell types including skeletal muscle, thymus, and a B-cell line.

Its subcellular location is the nucleus. Transcriptional regulator. Involved in the initiation of neuronal differentiation. Activates transcription by binding to the E box (5'-CANNTG-3'). May be involved in the functional network that regulates the development of the GnRH axis. The protein is Transcription factor 12 (TCF12) of Homo sapiens (Human).